We begin with the raw amino-acid sequence, 448 residues long: Bifunctional F420 biosynthesis protein FbiB (448 aa).

The interval 1–244 is coenzyme F420:L-glutamate ligase; sequence MTGPEHGSAS…PGANDLFWLG (244 aa). GTP contacts are provided by residues 20–23, serine 50, and lysine 55; that span reads LPEF. Residue aspartate 109 coordinates a divalent metal cation. Asparagine 112 contributes to the GTP binding site. 2 residues coordinate a divalent metal cation: aspartate 150 and threonine 151. The segment at 245–448 is dehydro-coenzyme F420-0 reductase; that stretch reads TAEALELGRQ…VPAADLLILK (204 aa). FMN is bound by residues 260–264 and alanine 288; that span reads RRSVR. Aspartate 320 provides a ligand contact to coenzyme F420-(gamma-Glu)n. Residues glycine 399 and arginine 436 each contribute to the FMN site.

In the N-terminal section; belongs to the CofE family. Mg(2+) serves as cofactor. The cofactor is Mn(2+). K(+) is required as a cofactor.

It carries out the reaction oxidized coenzyme F420-0 + GTP + L-glutamate = oxidized coenzyme F420-1 + GDP + phosphate + H(+). The enzyme catalyses oxidized coenzyme F420-1 + GTP + L-glutamate = oxidized coenzyme F420-2 + GDP + phosphate + H(+). The catalysed reaction is oxidized coenzyme F420-(gamma-L-Glu)(n) + GTP + L-glutamate = oxidized coenzyme F420-(gamma-L-Glu)(n+1) + GDP + phosphate + H(+). It catalyses the reaction oxidized coenzyme F420-0 + FMN + H(+) = dehydro coenzyme F420-0 + FMNH2. Its pathway is cofactor biosynthesis; coenzyme F420 biosynthesis. Its function is as follows. Bifunctional enzyme that catalyzes the GTP-dependent successive addition of multiple gamma-linked L-glutamates to the L-lactyl phosphodiester of 7,8-didemethyl-8-hydroxy-5-deazariboflavin (F420-0) to form polyglutamated F420 derivatives, and the FMNH2-dependent reduction of dehydro-F420-0 to form F420-0. The protein is Bifunctional F420 biosynthesis protein FbiB of Mycobacterium tuberculosis (strain ATCC 25177 / H37Ra).